The following is a 334-amino-acid chain: D-alanine--D-alanine ligase (334 aa).

One can recognise an ATP-grasp domain in the interval Lys114–Ala314. Leu140 to Thr195 is a binding site for ATP. Positions 267, 281, and 283 each coordinate Mg(2+).

The protein belongs to the D-alanine--D-alanine ligase family. Mg(2+) is required as a cofactor. Mn(2+) serves as cofactor.

Its subcellular location is the cytoplasm. It carries out the reaction 2 D-alanine + ATP = D-alanyl-D-alanine + ADP + phosphate + H(+). It functions in the pathway cell wall biogenesis; peptidoglycan biosynthesis. Its function is as follows. Cell wall formation. The protein is D-alanine--D-alanine ligase of Paracidovorax citrulli (strain AAC00-1) (Acidovorax citrulli).